The chain runs to 1104 residues: Transcription initiation factor TFIID subunit 2 (1104 aa).

A disordered region spans residues 1040–1104 (PSTPGLSKYR…RSVRSPSLSD (65 aa)). Residues 1048–1076 (YRPHHHHHHHEHKKKKKKHKHKHKHKHKH) are compositionally biased toward basic residues. Residues Ser1090, Ser1093, Ser1099, Ser1101, and Ser1103 each carry the phosphoserine modification. Residues 1090-1104 (SPASGRSVRSPSLSD) show a composition bias toward polar residues.

It belongs to the TAF2 family. Component of the TFIID basal transcription factor complex, composed of TATA-box-binding protein TBP, and a number of TBP-associated factors (TAFs), including TAF1, TAF2, TAF3, TAF4, TAF5, TAF6, TAF7, TAF8, TAF9, TAF10, TAF11, TAF12 and TAF13. Interacts with TAF2C1. Component of the TFTC-HAT complex.

It localises to the nucleus. Functionally, the TFIID basal transcription factor complex plays a major role in the initiation of RNA polymerase II (Pol II)-dependent transcription. TFIID recognizes and binds promoters with or without a TATA box via its subunit TBP, a TATA-box-binding protein, and promotes assembly of the pre-initiation complex (PIC). The TFIID complex consists of TBP and TBP-associated factors (TAFs), including TAF1, TAF2, TAF3, TAF4, TAF5, TAF6, TAF7, TAF8, TAF9, TAF10, TAF11, TAF12 and TAF13. TAF2 forms a promoter DNA binding subcomplex of TFIID, together with TAF7 and TAF1. The chain is Transcription initiation factor TFIID subunit 2 (Taf2) from Mus musculus (Mouse).